We begin with the raw amino-acid sequence, 96 residues long: MMRKLAVLVLAVAMVAACGGGVVGVAGAGCNAGQLTVCTGAIAGGARPTAACCSSLRAQQGCFCQFAKDPRYGRYVNSPNARKAVSSCGIALPTCH.

Positions 1–27 are cleaved as a signal peptide; the sequence is MMRKLAVLVLAVAMVAACGGGVVGVAG. 4 disulfide bridges follow: C30–C62, C38–C52, C53–C88, and C64–C95.

Functionally, transfer lipids across membranes. May play a role in plant defense or in the biosynthesis of cuticle layers. This chain is Non-specific lipid-transfer protein 2 (LTP-2), found in Oryza sativa subsp. japonica (Rice).